Here is a 273-residue protein sequence, read N- to C-terminus: Anthranilate synthase beta subunit 2, chloroplastic (273 aa).

A chloroplast-targeting transit peptide spans 1–36 (MAATTLYNSCLLQPKYGFTTRRLNQSLVNSLTNPTR). A Glutamine amidotransferase type-1 domain is found at 71 to 270 (PIIVIDNYDS…IKLVEKKESE (200 aa)). C149 acts as the Nucleophile in catalysis. Active-site residues include H244 and E246.

Heterotetramer consisting of two non-identical subunits: a beta subunit and a large alpha subunit.

It localises to the plastid. Its subcellular location is the chloroplast. The enzyme catalyses chorismate + L-glutamine = anthranilate + pyruvate + L-glutamate + H(+). Its pathway is amino-acid biosynthesis; L-tryptophan biosynthesis; L-tryptophan from chorismate: step 1/5. With respect to regulation, feedback inhibition by tryptophan. Its function is as follows. Part of a heterotetrameric complex that catalyzes the two-step biosynthesis of anthranilate, an intermediate in the biosynthesis of L-tryptophan. In the first step, the glutamine-binding beta subunit of anthranilate synthase (AS) provides the glutamine amidotransferase activity which generates ammonia as a substrate that, along with chorismate, is used in the second step, catalyzed by the large alpha subunit of AS to produce anthranilate. This chain is Anthranilate synthase beta subunit 2, chloroplastic (ASB2), found in Arabidopsis thaliana (Mouse-ear cress).